A 404-amino-acid chain; its full sequence is Spore development regulator RYP2 (404 aa).

Disordered regions lie at residues Met-1–Val-46, Leu-200–Gln-231, and Ser-382–Gly-404. A Velvet domain is found at Leu-17 to Arg-194. The span at Asn-29–Val-46 shows a compositional bias: basic and acidic residues. Positions Ser-382 to Ser-397 are enriched in polar residues.

The protein belongs to the velvet family. VosA subfamily. Forms a heterodimeric complex with RYP3; the formation of the RYP2-RYP3 complex is light-dependent.

The protein resides in the nucleus. Component of the RYP2-RYP3 heterodimeric complex that plays a dual role in activating genes associated with spore maturation and repressing certain development-associated genes. The complex binds DNA through the DNA-binding domain of vosA that recognizes an 11-nucleotide consensus sequence 5'-CTGGCCGCGGC-3' consisting of two motifs in the promoters of key developmental regulatory genes. Required for viable spore production and regulation of sporulation in response to temperature and for the switch to yeast-form in the presence of host cells. This Ajellomyces capsulatus (Darling's disease fungus) protein is Spore development regulator RYP2.